A 235-amino-acid chain; its full sequence is Orotidine 5'-phosphate decarboxylase (235 aa).

Substrate is bound by residues D10, K32, 59–68 (DLKLHDIPNT), T123, R184, Q193, G213, and R214. Residue K61 is the Proton donor of the active site.

The protein belongs to the OMP decarboxylase family. Type 1 subfamily. Homodimer.

The catalysed reaction is orotidine 5'-phosphate + H(+) = UMP + CO2. It functions in the pathway pyrimidine metabolism; UMP biosynthesis via de novo pathway; UMP from orotate: step 2/2. In terms of biological role, catalyzes the decarboxylation of orotidine 5'-monophosphate (OMP) to uridine 5'-monophosphate (UMP). The chain is Orotidine 5'-phosphate decarboxylase from Paramagnetospirillum magneticum (strain ATCC 700264 / AMB-1) (Magnetospirillum magneticum).